The sequence spans 226 residues: Glycerol-3-phosphate acyltransferase (226 aa).

6 consecutive transmembrane segments (helical) span residues 1-21 (MGFWLSLCGAVVLVAYLLGSF), 60-80 (FVLGLDCLKGVLAIALVYYLF), 102-122 (LVTLAGIAAILGHSKSIFLGF), 134-154 (ILLAMNWQVGLATFGVFAVVV), 159-178 (IVSLSSIMGAIAVSIVMVFL), and 182-197 (LPYILFGIAGGLYVIL).

This sequence belongs to the PlsY family. As to quaternary structure, probably interacts with PlsX.

It is found in the cell inner membrane. The enzyme catalyses an acyl phosphate + sn-glycerol 3-phosphate = a 1-acyl-sn-glycero-3-phosphate + phosphate. It functions in the pathway lipid metabolism; phospholipid metabolism. Its function is as follows. Catalyzes the transfer of an acyl group from acyl-phosphate (acyl-PO(4)) to glycerol-3-phosphate (G3P) to form lysophosphatidic acid (LPA). This enzyme utilizes acyl-phosphate as fatty acyl donor, but not acyl-CoA or acyl-ACP. The chain is Glycerol-3-phosphate acyltransferase from Nostoc sp. (strain PCC 7120 / SAG 25.82 / UTEX 2576).